Consider the following 1175-residue polypeptide: Structural maintenance of chromosomes protein 2-1 (1175 aa).

The Zinc-hook domain maps to 2–1161 (HIKEICLEGF…NVLFRTKFVD (1160 aa)). Position 32–39 (32–39 (GLNGSGKS)) interacts with ATP. Positions 172–508 (RMYENKKEAA…AQLANFQFTY (337 aa)) form a coiled coil. The SMC hinge domain occupies 518–638 (SKVKGVVAKL…KTTDVAKEVA (121 aa)). Positions 673-1028 (LRKLHDLAEA…ELDEKKKETL (356 aa)) form a coiled coil.

Belongs to the SMC family. SMC2 subfamily. In terms of assembly, forms a heterodimer with SMC4. Component of the condensin complex, which contains the SMC2 and SMC4 heterodimer, and three non SMC subunits that probably regulate the complex: CAPH, CAPD2 and CAPG. In terms of tissue distribution, highly expressed in roots and young floral buds.

It is found in the nucleus. In terms of biological role, central component of the condensin complex, a complex required for conversion of interphase chromatin into mitotic-like condense chromosomes. The condensin complex probably introduces positive supercoils into relaxed DNA in the presence of type I topoisomerases and converts nicked DNA into positive knotted forms in the presence of type II topoisomerases. Also involved in chromosome segregation in meiosis. The protein is Structural maintenance of chromosomes protein 2-1 (SMC2-1) of Arabidopsis thaliana (Mouse-ear cress).